A 127-amino-acid polypeptide reads, in one-letter code: Fluoride-specific ion channel FluC 1 (127 aa).

A run of 4 helical transmembrane segments spans residues 3-23 (LLIV…VGQW), 35-55 (IAML…FGLY), 74-94 (IGFF…VLLI), and 102-122 (LFSY…LGFY). 2 residues coordinate Na(+): Gly-78 and Thr-81.

The protein belongs to the fluoride channel Fluc/FEX (TC 1.A.43) family.

It is found in the cell membrane. It catalyses the reaction fluoride(in) = fluoride(out). With respect to regulation, na(+) is not transported, but it plays an essential structural role and its presence is essential for fluoride channel function. In terms of biological role, fluoride-specific ion channel. Important for reducing fluoride concentration in the cell, thus reducing its toxicity. The polypeptide is Fluoride-specific ion channel FluC 1 (Halalkalibacterium halodurans (strain ATCC BAA-125 / DSM 18197 / FERM 7344 / JCM 9153 / C-125) (Bacillus halodurans)).